The chain runs to 222 residues: Kinetochore protein Spc25 (222 aa).

Residues 51-86 are a coiled coil; that stretch reads RHQRKVGKLQKVLMERREELDKRVSFIEELDRELEA.

The protein belongs to the SPC25 family. In terms of assembly, component of the Ndc80 complex, which is composed of Ndc80, Nuf2 and Spc25.

The protein localises to the nucleus. It localises to the chromosome. The protein resides in the centromere. It is found in the kinetochore. Acts as a component of the essential kinetochore-associated Ndc80 complex, which is required for chromosome segregation and spindle checkpoint activity during meiosis and mitosis. Required for kinetochore integrity and the organization of stable microtubule binding sites in the outer plate of the kinetochore. Participates in SAC signaling that responds specifically to disruptions in spindle microtubule dynamics. The NDC80 complex synergistically enhances the affinity of the SKA1 complex for microtubules and may allow the NDC80 complex to track depolymerizing microtubules. The chain is Kinetochore protein Spc25 from Drosophila simulans (Fruit fly).